A 350-amino-acid polypeptide reads, in one-letter code: Small ribosomal subunit biogenesis GTPase RsgA (350 aa).

Positions 1–17 are enriched in polar residues; it reads MSKNKLSKGQQRRVNAN. The tract at residues 1-33 is disordered; the sequence is MSKNKLSKGQQRRVNANHQRRLKTSKEKPDYDD. Residues 104–273 enclose the CP-type G domain; it reads TSVLTRPDFY…VIDSPGVREF (170 aa). Residues 160 to 163 and 214 to 222 each bind GTP; these read NKID and GQSGVGKSS. Cys297, Cys302, His304, and Cys310 together coordinate Zn(2+).

It belongs to the TRAFAC class YlqF/YawG GTPase family. RsgA subfamily. As to quaternary structure, monomer. Associates with 30S ribosomal subunit, binds 16S rRNA. Requires Zn(2+) as cofactor.

The protein localises to the cytoplasm. Functionally, one of several proteins that assist in the late maturation steps of the functional core of the 30S ribosomal subunit. Helps release RbfA from mature subunits. May play a role in the assembly of ribosomal proteins into the subunit. Circularly permuted GTPase that catalyzes slow GTP hydrolysis, GTPase activity is stimulated by the 30S ribosomal subunit. This Escherichia coli (strain SMS-3-5 / SECEC) protein is Small ribosomal subunit biogenesis GTPase RsgA.